Reading from the N-terminus, the 203-residue chain is Pyridoxal 5'-phosphate synthase subunit PdxT (203 aa).

L-glutamine is bound at residue 51–53 (GES). The active-site Nucleophile is the Cys83. Residues Arg110 and 137–138 (IR) contribute to the L-glutamine site. Active-site charge relay system residues include His172 and Glu174.

It belongs to the glutaminase PdxT/SNO family. In terms of assembly, in the presence of PdxS, forms a dodecamer of heterodimers. Only shows activity in the heterodimer.

It catalyses the reaction aldehydo-D-ribose 5-phosphate + D-glyceraldehyde 3-phosphate + L-glutamine = pyridoxal 5'-phosphate + L-glutamate + phosphate + 3 H2O + H(+). It carries out the reaction L-glutamine + H2O = L-glutamate + NH4(+). It functions in the pathway cofactor biosynthesis; pyridoxal 5'-phosphate biosynthesis. In terms of biological role, catalyzes the hydrolysis of glutamine to glutamate and ammonia as part of the biosynthesis of pyridoxal 5'-phosphate. The resulting ammonia molecule is channeled to the active site of PdxS. This chain is Pyridoxal 5'-phosphate synthase subunit PdxT, found in Thermoplasma acidophilum (strain ATCC 25905 / DSM 1728 / JCM 9062 / NBRC 15155 / AMRC-C165).